The sequence spans 152 residues: MEEKTLKISKIKDGTVIDHIPSGKALRVLSILGIRDDVDYTVSVGMHVPSSKMEYKDVIKIENRSLDKNELDMISLTAPNATISIIKNYEISEKFKVELPPKLIGIIKCKNQNCITNTREPVKPEFEIVSRHPLVLRCVYCQRTMNERDVFE.

Zn(2+) is bound by residues cysteine 109, cysteine 114, cysteine 138, and cysteine 141.

It belongs to the PyrI family. As to quaternary structure, contains catalytic and regulatory chains. Zn(2+) serves as cofactor.

Functionally, involved in allosteric regulation of aspartate carbamoyltransferase. The chain is Aspartate carbamoyltransferase regulatory chain from Thermoplasma volcanium (strain ATCC 51530 / DSM 4299 / JCM 9571 / NBRC 15438 / GSS1).